The sequence spans 982 residues: Serine/threonine-protein kinase PknD (982 aa).

The 292-residue stretch at 51-342 (YQIIKSIGKG…ELIRDIENYL (292 aa)) folds into the Protein kinase domain. Residues 57-65 (IGKGGMGEV) and K80 each bind ATP. D186 (proton acceptor) is an active-site residue.

This sequence belongs to the protein kinase superfamily. Ser/Thr protein kinase family. Post-translationally, autophosphorylated on serine and threonine residues.

It catalyses the reaction L-seryl-[protein] + ATP = O-phospho-L-seryl-[protein] + ADP + H(+). The catalysed reaction is L-threonyl-[protein] + ATP = O-phospho-L-threonyl-[protein] + ADP + H(+). In terms of biological role, together with the serine/threonine kinase Pkn1, may play a role in the specific interactions with host proteins during intracellular growth. In Protochlamydia amoebophila (strain UWE25), this protein is Serine/threonine-protein kinase PknD.